A 498-amino-acid chain; its full sequence is Putative antiporter subunit mnhD2 (498 aa).

Transmembrane regions (helical) follow at residues 2–22, 32–52, 78–98, 108–128, 130–150, 161–181, 209–229, 240–260, 271–291, 308–328, 330–350, 369–389, 403–423, and 451–471; these read LSNLLILPMLLPFLCALILVF, YLYLGTMTITTIISLMLLIYV, LSLIMVTTASFVITLIMAYGF, YHLPSFILFLSVGVIGSFLTS, LFNLYVMFEIMLLASFVLITL, IIYVVLNIIGSWLFLLGIGLL, ISLIFLVAFSAKAALVLFMWL, LAALFAALMTKVGAYALIRFF, IHPLLATMAAITMVIGAIGVI, IGFIILGLGTNTFAGINGAIF, LVNDIVVKTLLFFIIGSLVYI, FGVAFIIMIFAIGGVPPFSGF, GNYIGLALMIITSLIAMYSLF, and ILSILVVVVIAIGIAAPVVLN.

The protein belongs to the CPA3 antiporters (TC 2.A.63) subunit D family. As to quaternary structure, may form a heterooligomeric complex that consists of seven subunits: mnhA2, mnhB2, mnhC2, mnhD2, mnhE2, mnhF2 and mnhG2.

It is found in the cell membrane. The protein is Putative antiporter subunit mnhD2 (mnhD2) of Staphylococcus aureus (strain JH1).